We begin with the raw amino-acid sequence, 200 residues long: BREX protein BrxA (200 aa).

This sequence belongs to the BrxA family.

Its function is as follows. BREX systems (bacteriophage exclusion) provide immunity against bacteriophage. Part of a type 1 BREX system. This system allows phage adsorption but prevents phage DNA replication, without degradation of the phage DNA. Methylation of bacterial DNA by PglX probably guides self/non-self discrimination. When the brxA-brxB-brxC-pglX and pglZ-brxL operons are transformed into a susceptible B.subtilis strain (BEST7003) they confer resistance to bacteriophages SPbeta, SP16, Zeta, phi3T and SP02 and partial protection to phages SP01 and SP82G (these include lytic and temperate phage). They do not protect against phages phi105, rho10 or rho14. Additionally confers a very slight reduction in efficiency of plasmid transformation. This is BREX protein BrxA from Bacillus cereus (strain H3081.97).